Reading from the N-terminus, the 451-residue chain is Cyclin-dependent kinase 18 (451 aa).

The disordered stretch occupies residues 39 to 61 (RNEDGRDEPGQLSPGVQYQQRQN). Serine 51 bears the Phosphoserine mark. Positions 52-61 (PGVQYQQRQN) are enriched in polar residues. 2 positions are modified to phosphoserine: serine 66 and serine 109. Positions 121–402 (YVKLDKLGEG…AEAALSHPYF (282 aa)) constitute a Protein kinase domain. ATP contacts are provided by residues 127–135 (LGEGTYATV) and lysine 150. Residue aspartate 242 is the Proton acceptor of the active site. Phosphoserine occurs at positions 417 and 420.

This sequence belongs to the protein kinase superfamily. CMGC Ser/Thr protein kinase family. CDC2/CDKX subfamily. As to expression, in brain, kidney, intestine and at a much lower level, in fetal tissues.

It carries out the reaction L-seryl-[protein] + ATP = O-phospho-L-seryl-[protein] + ADP + H(+). The enzyme catalyses L-threonyl-[protein] + ATP = O-phospho-L-threonyl-[protein] + ADP + H(+). May play a role in signal transduction cascades in terminally differentiated cells. The polypeptide is Cyclin-dependent kinase 18 (Cdk18) (Rattus norvegicus (Rat)).